A 197-amino-acid polypeptide reads, in one-letter code: Protein-S-isoprenylcysteine O-methyltransferase B (197 aa).

3 helical membrane-spanning segments follow: residues 16 to 36 (MFLA…AIHG), 52 to 72 (ALAM…FPGL), and 81 to 101 (FGLT…ITAG). S-adenosyl-L-methionine is bound by residues 116–119 (HKLV), Y124, and 129–132 (HPSY). Residues 140 to 160 (VGTQVMLCNPISAIAFAVVVW) form a helical membrane-spanning segment. R166 is a substrate binding site. An S-adenosyl-L-methionine-binding site is contributed by E170.

It belongs to the class VI-like SAM-binding methyltransferase superfamily. Isoprenylcysteine carboxyl methyltransferase family. Requires Zn(2+) as cofactor. Expressed in flowers, stems, leaves, roots and siliques. Detected in apices and vascular tissues of leaves and roots, in the stigma and in the filaments and anthers of stamen. Not found in petioles or hypocotyls.

It localises to the endoplasmic reticulum membrane. The enzyme catalyses [protein]-C-terminal S-[(2E,6E)-farnesyl]-L-cysteine + S-adenosyl-L-methionine = [protein]-C-terminal S-[(2E,6E)-farnesyl]-L-cysteine methyl ester + S-adenosyl-L-homocysteine. With respect to regulation, inhibited by farnesylthioacetic acid (FTAA) and N-acetyl-S-trans, trans-farnesyl-l-cysteine (AFC). Catalyzes the post-translational methylation of isoprenylated C-terminal cysteine residues, resulting in the modulation of the function of prenylated proteins. Involved in negative regulation of abscisic acid signaling. Carboxyl methylation is a reversible and potentially regulated step in the post-translational modification of prenylated proteins. The sequence is that of Protein-S-isoprenylcysteine O-methyltransferase B from Arabidopsis thaliana (Mouse-ear cress).